The sequence spans 374 residues: Type II methyltransferase M.NgoFVII (374 aa).

Residues 16 to 344 enclose the SAM-dependent MTase C5-type domain; the sequence is PKILSLFSGC…KSILPIFSDN (329 aa). Residue Cys88 is part of the active site.

This sequence belongs to the class I-like SAM-binding methyltransferase superfamily. C5-methyltransferase family.

It carries out the reaction a 2'-deoxycytidine in DNA + S-adenosyl-L-methionine = a 5-methyl-2'-deoxycytidine in DNA + S-adenosyl-L-homocysteine + H(+). Functionally, a methylase, recognizes the double-stranded sequence 5'-GCSGC-3', methylates C-5 on both strands, and protects the DNA from cleavage by the NgoFVII endonuclease. This Neisseria gonorrhoeae protein is Type II methyltransferase M.NgoFVII (ngoFVIIM).